We begin with the raw amino-acid sequence, 197 residues long: Ribonuclease HII (197 aa).

One can recognise an RNase H type-2 domain in the interval 9–197 (ELIAGVDEVG…APVKKALEQF (189 aa)). The a divalent metal cation site is built by aspartate 15, glutamate 16, and aspartate 107.

The protein belongs to the RNase HII family. Mn(2+) serves as cofactor. Mg(2+) is required as a cofactor.

The protein resides in the cytoplasm. It carries out the reaction Endonucleolytic cleavage to 5'-phosphomonoester.. In terms of biological role, endonuclease that specifically degrades the RNA of RNA-DNA hybrids. This is Ribonuclease HII from Haemophilus influenzae (strain 86-028NP).